The chain runs to 528 residues: Protein arginine N-methyltransferase 3 (528 aa).

Residues 1–42 are disordered; the sequence is MCSLAAGNGQGAELGPEPLELSDSGDDAGWEDEDADAEPAQG. C2 carries the N-acetylcysteine modification. A phosphoserine mark is found at S22 and S24. Over residues 23–37 the composition is skewed to acidic residues; sequence DSGDDAGWEDEDADA. The C2H2-type zinc-finger motif lies at 46 to 69; that stretch reads TPCLFCDRLFRSAEETFSHCKLEH. A Phosphoserine modification is found at S169. The mediates interaction with ALDH1A1 stretch occupies residues 184-528; it reads MKQFAQDFVM…NSSTQTYSLQ (345 aa). The SAM-dependent MTase PRMT-type domain occupies 214–528; the sequence is DGVYFSSYGH…NSSTQTYSLQ (315 aa). S-adenosyl-L-homocysteine-binding residues include R236, G260, D282, S284, I310, and E311. Residues E326 and E335 contribute to the active site.

Belongs to the class I-like SAM-binding methyltransferase superfamily. Protein arginine N-methyltransferase family. Monomer and homodimer. Interacts with EPB41L3 (via FERM domain); the interaction is direct and inhibits the protein-arginine N-methyltransferase activity of PRMT3. Interacts with the 40S ribosomal protein RPS2. Interacts with ALDH1A1; the interaction is direct, inhibits ALDH1A1 aldehyde dehydrogenase activity and is independent of the methyltransferase activity of PRMT3. Ubiquitously expressed.

It is found in the cytoplasm. Its subcellular location is the cytosol. The protein localises to the nucleus. It carries out the reaction L-arginyl-[protein] + S-adenosyl-L-methionine = N(omega)-methyl-L-arginyl-[protein] + S-adenosyl-L-homocysteine + H(+). It catalyses the reaction L-arginyl-[protein] + 2 S-adenosyl-L-methionine = N(omega),N(omega)-dimethyl-L-arginyl-[protein] + 2 S-adenosyl-L-homocysteine + 2 H(+). Its activity is regulated as follows. Inhibited by N-ethylmaleimide and high concentrations of zinc chloride. Protein-arginine N-methyltransferase that catalyzes both the monomethylation and asymmetric dimethylation of the guanidino nitrogens of arginine residues in target proteins, and therefore falls into the group of type I methyltransferases. Catalyzes the asymmetric arginine dimethylation at multiple sites in the Arg/Gly-rich region of small ribosomal subunit protein uS5/RPS2. Also appears to methylate other ribosomal proteins. May regulate retinoic acid synthesis and signaling by inhibiting ALDH1A1 retinal dehydrogenase activity. Contributes to methylation of histone H4 'Arg-3', a specific tag for epigenetic transcriptional activation. Promotes osteogenesis. This chain is Protein arginine N-methyltransferase 3, found in Rattus norvegicus (Rat).